Reading from the N-terminus, the 342-residue chain is Farnesyl pyrophosphate synthase 2 (342 aa).

Lys48, Arg51, and Gln86 together coordinate isopentenyl diphosphate. Asp93 and Asp97 together coordinate Mg(2+). Arg102 is a binding site for dimethylallyl diphosphate. An isopentenyl diphosphate-binding site is contributed by Arg103. Residues Lys190, Thr191, Gln229, Lys246, and Lys255 each contribute to the dimethylallyl diphosphate site.

The protein belongs to the FPP/GGPP synthase family. Mg(2+) serves as cofactor.

It localises to the cytoplasm. The enzyme catalyses isopentenyl diphosphate + dimethylallyl diphosphate = (2E)-geranyl diphosphate + diphosphate. It carries out the reaction isopentenyl diphosphate + (2E)-geranyl diphosphate = (2E,6E)-farnesyl diphosphate + diphosphate. It functions in the pathway isoprenoid biosynthesis; farnesyl diphosphate biosynthesis; farnesyl diphosphate from geranyl diphosphate and isopentenyl diphosphate: step 1/1. Its pathway is isoprenoid biosynthesis; geranyl diphosphate biosynthesis; geranyl diphosphate from dimethylallyl diphosphate and isopentenyl diphosphate: step 1/1. Catalyzes the sequential condensation of isopentenyl pyrophosphate with the allylic pyrophosphates, dimethylallyl pyrophosphate, and then with the resultant geranylpyrophosphate to the ultimate product farnesyl pyrophosphate. This chain is Farnesyl pyrophosphate synthase 2 (FPS2), found in Parthenium argentatum (Guayule rubber plant).